We begin with the raw amino-acid sequence, 223 residues long: uncharacterized protein (223 aa).

It localises to the plastid. It is found in the chloroplast. This is an uncharacterized protein from Mesostigma viride (Green alga).